A 777-amino-acid chain; its full sequence is Glucocorticoid receptor (777 aa).

Residues 1–14 (MDSKESLTPGREEN) are compositionally biased toward basic and acidic residues. The tract at residues 1–23 (MDSKESLTPGREENPSSVLAQER) is disordered. The modulating stretch occupies residues 1 to 420 (MDSKESLTPG…TATTGPPPKL (420 aa)). The residue at position 8 (Thr8) is a Phosphothreonine. Arg23 is subject to Omega-N-methylarginine. 4 positions are modified to phosphoserine: Ser45, Ser113, Ser134, and Ser141. Residues 130-140 (NRSTSVPENPK) show a composition bias toward polar residues. The tract at residues 130–183 (NRSTSVPENPKSSASTAVSAAPTEKEFPKTHSDISSEQQHLKGQTGTNGGNVKL) is disordered. The span at 141–150 (SSASTAVSAA) shows a compositional bias: low complexity. Residues 152–163 (TEKEFPKTHSDI) show a composition bias toward basic and acidic residues. Positions 164 to 174 (SSEQQHLKGQT) are enriched in polar residues. Residues Ser203, Ser211, and Ser226 each carry the phosphoserine modification. Lys258 participates in a covalent cross-link: Glycyl lysine isopeptide (Lys-Gly) (interchain with G-Cter in SUMO2). At Ser267 the chain carries Phosphoserine. Glycyl lysine isopeptide (Lys-Gly) (interchain with G-Cter in SUMO); alternate cross-links involve residues Lys277 and Lys293. Glycyl lysine isopeptide (Lys-Gly) (interchain with G-Cter in SUMO2); alternate cross-links involve residues Lys277 and Lys293. Residues 394-414 (SSPSMRPDVSSPPSSSSTATT) are compositionally biased toward low complexity. The tract at residues 394–415 (SSPSMRPDVSSPPSSSSTATTG) is disordered. The residue at position 404 (Ser404) is a Phosphoserine. Lys419 participates in a covalent cross-link: Glycyl lysine isopeptide (Lys-Gly) (interchain with G-Cter in ubiquitin). NR C4-type zinc fingers lie at residues 421–441 (CLVCSDEASGCHYGVLTCGSC) and 457–476 (CAGRNDCIIDKIRRKNCPAC). Positions 421–486 (CLVCSDEASG…RYRKCLQAGM (66 aa)) form a DNA-binding region, nuclear receptor. Residues Lys480, Lys492, Lys494, and Lys495 each carry the N6-acetyllysine modification. Positions 485 to 777 (GMNLEARKTK…NIKKLLFHQK (293 aa)) are interaction with CLOCK. Positions 487–523 (NLEARKTKKKIKGIQQATTGVSQETPENPANKTIVPA) are hinge. The 235-residue stretch at 524-758 (TLPQLTPTLV…FPEMLAEIIT (235 aa)) folds into the NR LBD domain. The interaction with CRY1 stretch occupies residues 532–697 (LVSLLEVIEP…EIRMTYIKEL (166 aa)). Lys703 participates in a covalent cross-link: Glycyl lysine isopeptide (Lys-Gly) (interchain with G-Cter in SUMO).

The protein belongs to the nuclear hormone receptor family. NR3 subfamily. Heteromultimeric cytoplasmic complex with HSP90AA1, HSPA1A/HSPA1B, and FKBP5 or another immunophilin such as PPID, STIP1, or the immunophilin homolog PPP5C. Upon ligand binding FKBP5 dissociates from the complex and FKBP4 takes its place, thereby linking the complex to dynein and mediating transport to the nucleus, where the complex dissociates. Probably forms a complex composed of chaperones HSP90 and HSP70, co-chaperones CDC37, PPP5C, TSC1 and client protein TSC2, CDK4, AKT, RAF1 and NR3C1; this complex does not contain co-chaperones STIP1/HOP and PTGES3/p23. Directly interacts with UNC45A. Binds to DNA as a homodimer, and as heterodimer with NR3C2 or the retinoid X receptor. Binds STAT5A and STAT5B homodimers and heterodimers. Interacts with NRIP1, POU2F1, POU2F2 and TRIM28. Interacts with several coactivator complexes, including the SMARCA4 complex, CREBBP/EP300, TADA2L (Ada complex) and p160 coactivators such as NCOA2 and NCOA6. Interaction with BAG1 inhibits transactivation. Interacts with HEXIM1 and TGFB1I1. Interacts with NCOA1. Interacts with NCOA3, SMARCA4, SMARCC1, SMARCD1, and SMARCE1. Interacts with CLOCK, CRY1 and CRY2 in a ligand-dependent fashion. Interacts with CIART. Interacts with RWDD3. Interacts with UBE2I/UBC9 and this interaction is enhanced in the presence of RWDD3. Interacts with GRIP1. Interacts with NR4A3 (via nuclear receptor DNA-binding domain), represses transcription activity of NR4A3 on the POMC promoter Nur response element (NurRE). Directly interacts with PNRC2 to attract and form a complex with UPF1 and DCP1A; the interaction leads to rapid mRNA degradation. Interacts with GSK3B. Interacts with FNIP1 and FNIP2. Interacts (via C-terminus) with HNRNPU (via C-terminus). Interacts with MCM3AP. Interacts (via domain NR LBD) with HSP90AA1 and HSP90AB1. In the absence of hormonal ligand, interacts with TACC1. Interacts (via NR LBD domain) with ZNF764 (via KRAB domain); the interaction regulates transcription factor activity of NR3C1 by directing its actions toward certain biologic pathways. In terms of processing, acetylation by CLOCK reduces its binding to glucocorticoid response elements and its transcriptional activity. Increased proteasome-mediated degradation in response to glucocorticoids. Post-translationally, phosphorylated in the absence of hormone; becomes hyperphosphorylated in the presence of glucocorticoid. The Ser-203, Ser-226 and Ser-404-phosphorylated forms are mainly cytoplasmic, and the Ser-211-phosphorylated form is nuclear. Phosphorylation at Ser-211 increases transcriptional activity. Phosphorylation at Ser-203, Ser-226 and Ser-404 decreases signaling capacity. Phosphorylation at Ser-404 may protect from glucocorticoid-induced apoptosis. Phosphorylation at Ser-203 and Ser-211 is not required in regulation of chromosome segregation. May be dephosphorylated by PPP5C, attenuates NR3C1 action. In terms of processing, ubiquitinated by UBR5, leading to its degradation: UBR5 specifically recognizes and binds ligand-bound NR3C1 when it is not associated with coactivators (NCOAs). In presence of NCOAs, the UBR5-degron is not accessible, preventing its ubiquitination and degradation. Sumoylation at Lys-277 and Lys-293 negatively regulates its transcriptional activity. Sumoylation at Lys-703 positively regulates its transcriptional activity in the presence of RWDD3. Sumoylation at Lys-277 and Lys-293 is dispensable whereas sumoylation at Lys-703 is critical for the stimulatory effect of RWDD3 on its transcriptional activity. Heat shock increases sumoylation in a RWDD3-dependent manner.

The protein localises to the cytoplasm. Its subcellular location is the nucleus. The protein resides in the mitochondrion. It localises to the cytoskeleton. It is found in the spindle. The protein localises to the microtubule organizing center. Its subcellular location is the centrosome. The protein resides in the chromosome. It localises to the nucleoplasm. In terms of biological role, receptor for glucocorticoids (GC). Has a dual mode of action: as a transcription factor that binds to glucocorticoid response elements (GRE), both for nuclear and mitochondrial DNA, and as a modulator of other transcription factors. Affects inflammatory responses, cellular proliferation and differentiation in target tissues. Involved in chromatin remodeling. Plays a role in rapid mRNA degradation by binding to the 5' UTR of target mRNAs and interacting with PNRC2 in a ligand-dependent manner which recruits the RNA helicase UPF1 and the mRNA-decapping enzyme DCP1A, leading to RNA decay. Could act as a coactivator for STAT5-dependent transcription upon growth hormone (GH) stimulation and could reveal an essential role of hepatic GR in the control of body growth. Mediates glucocorticoid-induced apoptosis. Promotes accurate chromosome segregation during mitosis. May act as a tumor suppressor. May play a negative role in adipogenesis through the regulation of lipolytic and antilipogenic gene expression. This is Glucocorticoid receptor (NR3C1) from Pongo abelii (Sumatran orangutan).